The following is a 557-amino-acid chain: Kelch repeat and BTB domain-containing protein 2 (557 aa).

The region spanning 26–95 (CDVIITIGDG…LYNRHISSMN (70 aa)) is the BTB domain. The region spanning 133–223 (HKLYEMVHIP…CIDIQNLDKK (91 aa)) is the BACK domain. Kelch repeat units follow at residues 305 to 352 (EIII…VIDD), 353 to 399 (TIYA…VLDQ), and 401 to 464 (IYII…SHKD).

As to quaternary structure, interacts (via BTB domain) with host CUL3.

It is found in the host cytoplasm. In terms of biological role, probable substrate-specific adapter of CUL3-containing E3 ubiquitin-protein ligases which mediate the ubiquitination and subsequent proteasomal degradation of host target proteins. This chain is Kelch repeat and BTB domain-containing protein 2 (KBTB2), found in Bos taurus (Bovine).